The following is a 237-amino-acid chain: NAD(P)H-hydrate epimerase (237 aa).

A YjeF N-terminal domain is found at 11 to 223 (AASLDRDLMN…GLDIPEYPGV (213 aa)). 61–65 (NNGGD) lines the (6S)-NADPHX pocket. K(+) is bound by residues asparagine 62 and aspartate 123. (6S)-NADPHX is bound by residues 127–133 (GFSFSGP) and aspartate 156. Residue serine 159 participates in K(+) binding.

This sequence belongs to the NnrE/AIBP family. It depends on K(+) as a cofactor.

It is found in the cytoplasm. The protein localises to the mitochondrion. The catalysed reaction is (6R)-NADHX = (6S)-NADHX. The enzyme catalyses (6R)-NADPHX = (6S)-NADPHX. In terms of biological role, catalyzes the epimerization of the S- and R-forms of NAD(P)HX, a damaged form of NAD(P)H that is a result of enzymatic or heat-dependent hydration. This is a prerequisite for the S-specific NAD(P)H-hydrate dehydratase to allow the repair of both epimers of NAD(P)HX. The polypeptide is NAD(P)H-hydrate epimerase (Ajellomyces capsulatus (strain G186AR / H82 / ATCC MYA-2454 / RMSCC 2432) (Darling's disease fungus)).